The following is an 876-amino-acid chain: Translation initiation factor IF-2 (876 aa).

One can recognise a tr-type G domain in the interval 378–547 (TRPPIITIMG…LTQSEMLELK (170 aa)). The segment at 387-394 (GHVDHGKT) is G1. GTP is bound at residue 387–394 (GHVDHGKT). The tract at residues 412 to 416 (RITQH) is G2. Residues 433 to 436 (DTPG) are G3. GTP contacts are provided by residues 433–437 (DTPGH) and 487–490 (NKID). A G4 region spans residues 487–490 (NKID). The segment at 523–525 (SAK) is G5.

This sequence belongs to the TRAFAC class translation factor GTPase superfamily. Classic translation factor GTPase family. IF-2 subfamily.

Its subcellular location is the cytoplasm. Its function is as follows. One of the essential components for the initiation of protein synthesis. Protects formylmethionyl-tRNA from spontaneous hydrolysis and promotes its binding to the 30S ribosomal subunits. Also involved in the hydrolysis of GTP during the formation of the 70S ribosomal complex. The protein is Translation initiation factor IF-2 of Buchnera aphidicola subsp. Baizongia pistaciae (strain Bp).